The sequence spans 235 residues: Probable WRKY transcription factor 66 (235 aa).

The WRKY DNA-binding region spans 79-147; the sequence is SPTPAHIDGF…YVGQHACEAP (69 aa).

It belongs to the WRKY group III family.

The protein localises to the nucleus. Transcription factor. Interacts specifically with the W box (5'-(T)TGAC[CT]-3'), a frequently occurring elicitor-responsive cis-acting element. The protein is Probable WRKY transcription factor 66 (WRKY66) of Arabidopsis thaliana (Mouse-ear cress).